The following is a 358-amino-acid chain: Probable protein phosphatase 2C 68 (358 aa).

The PPM-type phosphatase domain maps to 74–352 (RHGAASVAGR…DNISVVVVDL (279 aa)). Asp-117, Gly-118, Asp-298, and Asp-343 together coordinate Mn(2+).

The protein belongs to the PP2C family. Mg(2+) is required as a cofactor. The cofactor is Mn(2+).

The protein resides in the nucleus. It is found in the cytoplasm. It localises to the cytosol. It catalyses the reaction O-phospho-L-seryl-[protein] + H2O = L-seryl-[protein] + phosphate. The catalysed reaction is O-phospho-L-threonyl-[protein] + H2O = L-threonyl-[protein] + phosphate. Functionally, involved in the regulation of abiotic stress responses. Acts as a negative regulator of abscisic acid (ABA) signaling and positive regulator of abiotic stress signaling. May be involved in panicle development. This is Probable protein phosphatase 2C 68 from Oryza sativa subsp. japonica (Rice).